We begin with the raw amino-acid sequence, 555 residues long: E3 ubiquitin-protein ligase ARIH1 (555 aa).

The segment covering 1–47 has biased composition (acidic residues); that stretch reads MDSDEGYNYEFDEDEECSEEDSGAEEEEDDDEDEPDDDNLDLGEVEL. The tract at residues 1–93 is disordered; sequence MDSDEGYNYE…GGGGGPGHEQ (93 aa). Over residues 65–90 the composition is skewed to gly residues; that stretch reads ETGGGGGSALGPGGGGGGGGGGGGPG. Positions 103 to 151 are UBA-like; the sequence is TAEQILQHMVECIREVNEVIQNPATITRILLSHFNWDKEKLMERYFDGN. K140 carries the N6-acetyllysine modification. A TRIAD supradomain region spans residues 180–391; the sequence is QDMPCQICYL…SAWYNCNRYN (212 aa). Residues C184, C187, C201, H203, C206, C209, C229, C234, C274, C279, C295, C297, C302, C305, H310, C315, C342, and C345 each coordinate Zn(2+). The segment at 184 to 234 adopts an RING-type 1 zinc-finger fold; that stretch reads CQICYLNYPNSYFTGLECGHKFCMQCWSEYLTTKIMEEGMGQTISCPAHGC. Residues 254–315 form an IBR-type zinc finger; it reads LKYQHLITNS…GENWHDPVKC (62 aa). An RING-type 2; atypical zinc finger spans residues 342–373; that stretch reads CPKCHVTIEKDGGCNHMVCRNQNCKAEFCWVC. The active site involves C355. Zn(2+) is bound by residues C360, C365, C370, C373, H380, and C387. The tract at residues 406 to 555 is ariadne domain; it reads RAALQRYLFY…EKDLWEYIED (150 aa).

The protein belongs to the RBR family. Ariadne subfamily. Interacts (via the first RING-type zinc finger) with UBE2L3. Associates with cullin-RING ubiquitin ligase (CRL) complexes containing CUL1, CUL2 and CUL3. Interacts with neddylated CUL1. Interacts with neddylated CUL2. Interacts with neddylated CUL3. Interacts with neddylated CUL4A. As to expression, widely expressed.

The protein resides in the cytoplasm. It is found in the nucleus. It localises to the cajal body. The enzyme catalyses [E2 ubiquitin-conjugating enzyme]-S-ubiquitinyl-L-cysteine + [acceptor protein]-L-lysine = [E2 ubiquitin-conjugating enzyme]-L-cysteine + [acceptor protein]-N(6)-ubiquitinyl-L-lysine.. It functions in the pathway protein modification; protein ubiquitination. With respect to regulation, autoinhibited by the ariadne domain, which masks the second RING-type zinc finger that contains the active site and inhibits the E3 activity. Inhibition is relieved upon binding to neddylated cullin-RING ubiquitin ligase complexes, which activate the E3 ligase activity of ARIH1. Its function is as follows. E3 ubiquitin-protein ligase, which catalyzes ubiquitination of target proteins together with ubiquitin-conjugating enzyme E2 UBE2L3. Acts as an atypical E3 ubiquitin-protein ligase by working together with cullin-RING ubiquitin ligase (CRL) complexes and initiating ubiquitination of CRL substrates: associates with CRL complexes and specifically mediates addition of the first ubiquitin on CRLs targets. The initial ubiquitin is then elongated by CDC34/UBE2R1 and UBE2R2. E3 ubiquitin-protein ligase activity is activated upon binding to neddylated cullin-RING ubiquitin ligase complexes. Plays a role in protein translation in response to DNA damage by mediating ubiquitination of EIF4E2, the consequences of EIF4E2 ubiquitination are however unclear. According to a report, EIF4E2 ubiquitination leads to promote EIF4E2 cap-binding and protein translation arrest. According to another report EIF4E2 ubiquitination leads to its subsequent degradation. Acts as the ligase involved in ISGylation of EIF4E2. In vitro, controls the degradation of the LINC (LInker of Nucleoskeleton and Cytoskeleton) complex member SUN2 and may therefore have a role in the formation and localization of the LINC complex, and as a consequence, may act in nuclear subcellular localization and nuclear morphology. This Mus musculus (Mouse) protein is E3 ubiquitin-protein ligase ARIH1 (Arih1).